The primary structure comprises 1105 residues: Lysylphosphatidylglycerol biosynthesis bifunctional protein LysX (1105 aa).

Positions 1-603 (MTVTKPRSVQ…LLHHDGSAPD (603 aa)) are phosphatidylglycerol lysyltransferase. 7 helical membrane passes run 20–40 (VPAA…LASI), 62–82 (FPDT…ALAA), 86–106 (IAWL…AADI), 117–137 (FGEN…VLGY), 154–174 (AVLV…VELF), 186–203 (YVAN…DLFT), and 208–228 (VFLN…ATIV). A lysine--tRNA ligase region spans residues 604–1105 (VSGLRQSAIA…TLPFPLAKPH (502 aa)). Residues Asp1017 and Glu1024 each contribute to the Mg(2+) site.

In the N-terminal section; belongs to the LPG synthetase family. This sequence in the C-terminal section; belongs to the class-II aminoacyl-tRNA synthetase family. It depends on Mg(2+) as a cofactor.

The protein resides in the cell membrane. The enzyme catalyses tRNA(Lys) + L-lysine + ATP = L-lysyl-tRNA(Lys) + AMP + diphosphate. The catalysed reaction is L-lysyl-tRNA(Lys) + a 1,2-diacyl-sn-glycero-3-phospho-(1'-sn-glycerol) = a 1,2-diacyl-sn-glycero-3-phospho-1'-(3'-O-L-lysyl)-sn-glycerol + tRNA(Lys). Catalyzes the production of L-lysyl-tRNA(Lys)transfer and the transfer of a lysyl group from L-lysyl-tRNA(Lys) to membrane-bound phosphatidylglycerol (PG), which produces lysylphosphatidylglycerol (LPG), one of the components of the bacterial membrane with a positive net charge. LPG synthesis contributes to the resistance to cationic antimicrobial peptides (CAMPs) and likely protects M.tuberculosis against the CAMPs produced by competiting microorganisms (bacteriocins). In fact, the modification of anionic phosphatidylglycerol with positively charged L-lysine results in repulsion of the peptides. In Mycobacterium marinum (strain ATCC BAA-535 / M), this protein is Lysylphosphatidylglycerol biosynthesis bifunctional protein LysX (lysX).